A 215-amino-acid polypeptide reads, in one-letter code: C' protein (215 aa).

Residues 12–34 (MPSFLKKILKLRGRRQEDESRSR) are disordered. Residues 15-22 (FLKKILKL) are involved in self-degradation and in host STAT1 degradation.

This sequence belongs to the respirovirus protein C family. As to quaternary structure, the different isoforms interact (via C-terminus) with unphosphorylated and phosphorylated human STAT1 (via N-terminus), favoring the formation of parallel STAT1 homodimers. The different isoforms do not interact with host STAT2. C protein interacts with L protein; this interaction has an inhibitory effect on viral transcription and replication. In terms of processing, Y1 and Y2 proteins are produced not only by alternative initiation, but also by proteolytic cleavage of C'. Only alternative initiation is detected in vitro, whereas in vivo cleavage seems to be predominant.

The protein resides in the host cytoplasm. Its subcellular location is the virion. Its function is as follows. The different isoforms prevent the establishment of cellular antiviral state by blocking the interferon-alpha/beta (IFN-alpha/beta) and IFN-gamma signaling pathways. They inhibit IFN-alpha/beta induced tyrosine phosphorylation of STAT1 and STAT2. Blocking the IFN-alpha/beta pathway requires binding to STAT1 in the cytoplasm. They inhibit IFN-gamma induced serine phosphorylation of STAT1. Block the IFN-gamma pathway by binding to and stabilizing the parallel form of the STAT1 dimer, further inducing high-molecular-weight complex (HMWC) formation and inhibition of transcription by IFN-gamma. May also have a role in preventing the cell to enter apoptosis. Modulate regulation of viral transcription and replication. Overexpression inhibits the viral RNA polymerase. The absence of all C', C, Y1 and Y2 proteins leads to viral delayed growth. Plays an important role in virion particles release. Modulates virion shape. The sequence is that of C' protein (P/V/C) from Sendai virus (strain Z) (SeV).